We begin with the raw amino-acid sequence, 409 residues long: Putative integrase/recombinase y4rA (409 aa).

Residues 112–197 form the Core-binding (CB) domain; it reads SAVEQHVQAY…ALRSFLSYAR (86 aa). A Tyr recombinase domain is found at 220–402; that stretch reads SIPRAIGRDD…DLDALRTLAL (183 aa). Catalysis depends on residues Arg260, Lys284, His354, Arg357, and His380. Tyr389 serves as the catalytic O-(3'-phospho-DNA)-tyrosine intermediate.

Belongs to the 'phage' integrase family.

This is Putative integrase/recombinase y4rA from Sinorhizobium fredii (strain NBRC 101917 / NGR234).